Consider the following 404-residue polypeptide: Adenosylhomocysteinase (404 aa).

2 residues coordinate substrate: aspartate 114 and glutamate 139. An NAD(+)-binding site is contributed by threonine 140–threonine 142. Residues lysine 169 and aspartate 173 each coordinate substrate. Residues asparagine 174, glycine 203–glycine 208, glutamate 226, asparagine 261, alanine 282–histidine 284, and asparagine 329 contribute to the NAD(+) site.

It belongs to the adenosylhomocysteinase family. Requires NAD(+) as cofactor.

The protein resides in the cytoplasm. The catalysed reaction is S-adenosyl-L-homocysteine + H2O = L-homocysteine + adenosine. It functions in the pathway amino-acid biosynthesis; L-homocysteine biosynthesis; L-homocysteine from S-adenosyl-L-homocysteine: step 1/1. Functionally, may play a key role in the regulation of the intracellular concentration of adenosylhomocysteine. In Thermotoga maritima (strain ATCC 43589 / DSM 3109 / JCM 10099 / NBRC 100826 / MSB8), this protein is Adenosylhomocysteinase.